The chain runs to 232 residues: Oxidoreductase 1 (232 aa).

The protein belongs to the MQO family. The cofactor is FAD.

Functionally, oxidoreductase; part of the gene cluster that mediates the biosynthesis of elsinochromes, pigments consisting of at least four interconvertible tautomers (A, B, C and D) that have a core phenolic quinone to which various side chains are attached and which play an important role in fungal pathogenesis. The non-reducing polyketide synthase PKS1 was proposed to iteratively catalyze decarboxylation between acetyl-CoA and malonyl-CoA subunits for polyketide chain elongation. The released polyketide undergoes cyclization to form an aromatic ring, and proceeds via serial modification steps to produce the heptaketide back- bone of elsinochrome. As elsinochrome has a symmetrical structure, two identical heptaketides are fused to form a core 1,2-dihydrobenzo-perylene ring structure, which can then be successively modified to produce the various derivatives of elsinochrome. Some of these reactions may be cooperatively carried out, at least in part, by the products of RDT1, OXR1 and PKS1. PRF1, embedded within the elsinochrome cluster possibly functions to stabilize some of the biosynthetic enzymes required for elsinochrome production. As prefoldin is a hexamer containing 2 a and 4 b subunits, additional prefoldin subunits, whose coding genes may not immediately link to the elsinochrome biosynthetic gene cluster, are required to fulfill the chaperone function. In addition, no methyltransferase-coding gene exists within the biosynthetic gene cluster, even though elsinochrome has four methyl groups at positions C3, C7, C8 and C12. Apparently, the identified gene cluster does not contain the entire entourage of genes responsible for elsinochrome biosynthesis. Once elsinochrome is synthesized, it must be exported outside the fungal cells, which is probably accomplished by the ECT1 transporter, to avoid toxicity. This is Oxidoreductase 1 from Elsinoe fawcettii (Citrus scab fungus).